An 847-amino-acid polypeptide reads, in one-letter code: B-cell receptor CD22 (847 aa).

The signal sequence occupies residues 1-19 (MHLLGPWLLLLVLEYLAFS). The Ig-like V-type domain maps to 20 to 138 (DSSKWAFEHP…MERIHLNVSE (119 aa)). Residues 20–687 (DSSKWAFEHP…YYSPETIGRR (668 aa)) are Extracellular-facing. N-linked (GlcNAc...) asparagine glycosylation is found at asparagine 67, asparagine 101, and asparagine 112. N-acetylneuraminate is bound at residue arginine 120. Residues asparagine 135, asparagine 164, and asparagine 231 are each glycosylated (N-linked (GlcNAc...) asparagine). 6 consecutive Ig-like C2-type domains span residues 143–235 (PHIQ…DTVQ), 242–326 (PKLE…VFLQ), 331–416 (PEPS…LDVQ), 419–500 (PKKV…VALN), 505–582 (PRDV…QTAS), and 593–676 (PRRL…STLT). Cysteine 161 and cysteine 219 are joined by a disulfide. Cystine bridges form between cysteine 265–cysteine 309 and cysteine 353–cysteine 396. 5 N-linked (GlcNAc...) asparagine glycosylation sites follow: asparagine 363, asparagine 428, asparagine 445, asparagine 448, and asparagine 479. 2 disulfides stabilise this stretch: cysteine 442/cysteine 484 and cysteine 529/cysteine 571. Residues asparagine 574 and asparagine 634 are each glycosylated (N-linked (GlcNAc...) asparagine). Cysteine 616 and cysteine 659 form a disulfide bridge. Residues 688–708 (VAVGFGSCLAILILAICGLKL) traverse the membrane as a helical segment. Topologically, residues 709 to 847 (QRRWKRTQSQ…ENVDYVILKH (139 aa)) are cytoplasmic. Phosphoserine is present on residues serine 725, serine 726, and serine 729. 2 consecutive short sequence motifs (ITIM motif) follow at residues 760-765 (ISYTTL) and 794-799 (VTYSVL). At tyrosine 762 the chain carries Phosphotyrosine. Phosphotyrosine occurs at positions 807, 822, and 842. Short sequence motifs (ITIM motif) lie at residues 820 to 825 (IHYSEL) and 840 to 845 (VDYVIL).

Belongs to the immunoglobulin superfamily. SIGLEC (sialic acid binding Ig-like lectin) family. Predominantly monomer of isoform CD22-beta. Also found as heterodimer of isoform CD22-beta and a shorter isoform. Interacts with PTPN6/SHP-1, LYN, SYK, PIK3R1/PIK3R2 and PLCG1 upon phosphorylation. Interacts with GRB2, INPP5D and SHC1 upon phosphorylation. May form a complex with INPP5D/SHIP, GRB2 and SHC1. Phosphorylation of Tyr-762, Tyr-807 and Tyr-822 are involved in binding to SYK, GRB2 and SYK, respectively. Phosphorylation of Tyr-842 is involved in binding to SYK, PLCG2 and PIK3R1/PIK3R2. In terms of processing, phosphorylated on tyrosine residues by LYN.

The protein resides in the cell membrane. Its function is as follows. Most highly expressed siglec (sialic acid-binding immunoglobulin-like lectin) on B-cells that plays a role in various aspects of B-cell biology including differentiation, antigen presentation, and trafficking to bone marrow. Binds to alpha 2,6-linked sialic acid residues of surface molecules such as CD22 itself, CD45 and IgM in a cis configuration. Can also bind to ligands on other cells as an adhesion molecule in a trans configuration. Acts as an inhibitory coreceptor on the surface of B-cells and inhibits B-cell receptor induced signaling, characterized by inhibition of the calcium mobilization and cellular activation. Mechanistically, the immunoreceptor tyrosine-based inhibitory motif domain is phosphorylated by the Src kinase LYN, which in turn leads to the recruitment of the protein tyrosine phosphatase 1/PTPN6, leading to the negative regulation of BCR signaling. If this negative signaling from is of sufficient strength, apoptosis of the B-cell can be induced. The polypeptide is B-cell receptor CD22 (Pan paniscus (Pygmy chimpanzee)).